The following is a 431-amino-acid chain: Enolase (431 aa).

Residue Gln-166 participates in (2R)-2-phosphoglycerate binding. The Proton donor role is filled by Glu-208. Mg(2+) is bound by residues Asp-245, Glu-288, and Asp-315. (2R)-2-phosphoglycerate contacts are provided by Lys-340, Arg-369, Ser-370, and Lys-391. Catalysis depends on Lys-340, which acts as the Proton acceptor.

It belongs to the enolase family. Mg(2+) serves as cofactor.

Its subcellular location is the cytoplasm. The protein localises to the secreted. It localises to the cell surface. It carries out the reaction (2R)-2-phosphoglycerate = phosphoenolpyruvate + H2O. Its pathway is carbohydrate degradation; glycolysis; pyruvate from D-glyceraldehyde 3-phosphate: step 4/5. Catalyzes the reversible conversion of 2-phosphoglycerate (2-PG) into phosphoenolpyruvate (PEP). It is essential for the degradation of carbohydrates via glycolysis. This chain is Enolase, found in Clostridium acetobutylicum (strain ATCC 824 / DSM 792 / JCM 1419 / IAM 19013 / LMG 5710 / NBRC 13948 / NRRL B-527 / VKM B-1787 / 2291 / W).